A 632-amino-acid polypeptide reads, in one-letter code: tRNA endonuclease VMS1 (632 aa).

The C2H2-type zinc-finger motif lies at 72 to 96 (MRCSVCQMSFDSRNEQKAHYQTDYH). Residues 123–155 (HGIKSEDENSGGEQTSSDHEESEEASDRDPDLQ) form a disordered region. The 161-residue stretch at 232 to 392 (PMAISALFMV…KKAWCELSYL (161 aa)) folds into the VLRF1 domain. Residue Q295 is part of the active site. ANK repeat units follow at residues 470–500 (LTPTMLHYASQQGMKQMALILLSNIKCDPTI) and 504–530 (LGRTAWDLNRNDDVRHAFQIARYNLGE). 2 coiled-coil regions span residues 544-582 (LSREQVDEINEKKKAIENEKAEKLIKLELEAAKEKQRFA) and 608-632 (TDEQRRRLMREQRARAAEERMKKKY). The span at 578–589 (KQRFAKDAERGP) shows a compositional bias: basic and acidic residues. The segment at 578–632 (KQRFAKDAERGPGKKLTNIPSIQQQNLNSLTDEQRRRLMREQRARAAEERMKKKY) is disordered. Positions 595 to 608 (NIPSIQQQNLNSLT) are enriched in polar residues. The segment covering 609–632 (DEQRRRLMREQRARAAEERMKKKY) has biased composition (basic and acidic residues).

This sequence belongs to the ANKZF1/VMS1 family. Associates with 60S ribosomal subunit. Interacts with CDC48. Interacts with NPL4.

The protein resides in the cytoplasm. The protein localises to the mitochondrion. It is found in the endoplasmic reticulum membrane. Its function is as follows. Endonuclease that cleaves polypeptidyl-tRNAs downstream of the ribosome-associated quality control (RQC) pathway to release incompletely synthesized polypeptides for degradation. The RQC pathway disassembles aberrantly stalled translation complexes to recycle or degrade the constituent parts. VMS1 acts downstream disassembly of stalled ribosomes and specifically cleaves off the terminal 3'-CCA nucleotides universal to all tRNAs from polypeptidyl-tRNAs, releasing (1) ubiquitinated polypeptides from 60S ribosomal subunit for degradation by the ERAD pathway and (2) cleaved tRNAs for recycling. Component of an evolutionarily conserved system for ubiquitin-mediated mitochondria-associated protein degradation (MAD), which is necessary to maintain mitochondrial, cellular, and organismal viability. This is tRNA endonuclease VMS1 from Saccharomyces cerevisiae (strain ATCC 204508 / S288c) (Baker's yeast).